We begin with the raw amino-acid sequence, 426 residues long: Tachykinins (426 aa).

A propeptide spanning residues 1 to 116 is cleaved from the precursor; it reads MQCDFRVHQD…IEDNLSHEFE (116 aa). Arginine amide is present on arginine 127. Positions 131-145 are excised as a propeptide; the sequence is GYLTPDFEDSYFRDE. An Arginine amide modification is found at arginine 156. The propeptide occupies 160-167; the sequence is VVSDDDYY. Arginine 178 is modified (arginine amide). The propeptide occupies 182–235; sequence SLEEVLGEIEKKAAMDYYDTRDKKTYVFEYPEDYEKRLLASIRGKLKEFPMEWE. The residue at position 246 (arginine 246) is an Arginine amide. The propeptide occupies 250–259; sequence SLLDEIEELE. At arginine 270 the chain carries Arginine amide. A propeptide spanning residues 274–291 is cleaved from the precursor; that stretch reads NALENYIDYYLDPDMDFD. A disordered region spans residues 299–329; the sequence is QGMRGKKDSDKRAPMGFQGMRGKRNTGQRFD. The residue at position 302 (arginine 302) is an Arginine amide. Positions 306–308 are excised as a propeptide; sequence DSD. Arginine 319 carries the arginine amide modification. The propeptide occupies 323–358; it reads NTGQRFDTGINFNIRSSNEYQGTNNRRNALASCQLE. Arginine 369 and arginine 386 each carry arginine amide. A propeptide spanning residues 390–426 is cleaved from the precursor; the sequence is WATAPYEDDSPFISVFDNTERIGVDGDSPAILGNSIS.

The protein belongs to the tachykinin family. As to expression, tachykinins (TK) are expressed throughout the nervous system. APMGFQGMR-amide is also expressed in the retrocerebral complex (at protein level).

The protein resides in the secreted. In terms of biological role, tachykinins are active peptides which excite neurons, evoke behavioral responses, are potent vasodilators and secretagogues, and contract (directly or indirectly) many smooth muscles. The polypeptide is Tachykinins (Camponotus floridanus (Florida carpenter ant)).